We begin with the raw amino-acid sequence, 84 residues long: Subtilisin-chymotrypsin inhibitor-2A (84 aa).

Residues 1–23 (MSSVEKKPEGVNTGAGDRHNLKT) form a disordered region.

Belongs to the protease inhibitor I13 (potato type I serine protease inhibitor) family.

Its function is as follows. Inhibits both subtilisin and chymotrypsin. In Hordeum vulgare (Barley), this protein is Subtilisin-chymotrypsin inhibitor-2A.